The sequence spans 88 residues: HssA/B-like protein 9 (88 aa).

The segment covering 1–14 (MSILSALTSISNPM) has biased composition (polar residues). Residues 1–26 (MSILSALTSISNPMKSSKSSVANGGG) form a disordered region.

This sequence belongs to the hssA/B family.

This is HssA/B-like protein 9 (hssl9) from Dictyostelium discoideum (Social amoeba).